A 533-amino-acid polypeptide reads, in one-letter code: Beta-1,4 N-acetylgalactosaminyltransferase 1 (533 aa).

The Cytoplasmic segment spans residues 1–7 (MRLDRRA). A helical; Signal-anchor for type II membrane protein transmembrane segment spans residues 8–25 (LYALVLLLACASLGLLYA). Over 26 to 533 (STRDAPGLPN…KHRLQCMTAE (508 aa)) the chain is Lumenal. 2 N-linked (GlcNAc...) asparagine glycosylation sites follow: asparagine 79 and asparagine 274. Cysteine 429 and cysteine 476 are oxidised to a cystine.

Belongs to the glycosyltransferase 2 family. As to quaternary structure, homodimer; disulfide-linked. Strongly expressed in brain, testis, spleen, and to a lesser extent in liver.

The protein localises to the golgi apparatus membrane. The catalysed reaction is a ganglioside GM3 (d18:1(4E)) + UDP-N-acetyl-alpha-D-galactosamine = a ganglioside GM2 (d18:1(4E)) + UDP + H(+). It catalyses the reaction a ganglioside GD3 (d18:1(4E)) + UDP-N-acetyl-alpha-D-galactosamine = a ganglioside GD2 (d18:1(4E)) + UDP + H(+). It carries out the reaction a ganglioside GM3 + UDP-N-acetyl-alpha-D-galactosamine = a ganglioside GM2 + UDP + H(+). The enzyme catalyses a ganglioside GD3 + UDP-N-acetyl-alpha-D-galactosamine = a ganglioside GD2 + UDP + H(+). The catalysed reaction is a ganglioside GD1a + UDP-N-acetyl-alpha-D-galactosamine = a ganglioside GalNAc-GD1a + UDP + H(+). It catalyses the reaction a ganglioside GT3 (d18:1(4E)) + UDP-N-acetyl-alpha-D-galactosamine = a ganglioside GT2 (d18:1(4E)) + UDP + H(+). It carries out the reaction a beta-D-Gal-(1-&gt;4)-beta-D-Glc-(1&lt;-&gt;1)-Cer(d18:1(4E)) + UDP-N-acetyl-alpha-D-galactosamine = a ganglioside GA2 (d18:1(4E)) + UDP + H(+). The enzyme catalyses a neolactoside IV(3)-alpha-NeuGc-nLc4Cer + UDP-N-acetyl-alpha-D-galactosamine = a neolactoside IV(4)-beta-GalNAc-IV(3)-alpha-NeuGc-nLc4Cer + UDP + H(+). The protein operates within sphingolipid metabolism. Its function is as follows. Involved in the biosynthesis of gangliosides GM2, GD2, GT2 and GA2 from GM3, GD3, GT3 and GA3, respectively. The sequence is that of Beta-1,4 N-acetylgalactosaminyltransferase 1 from Rattus norvegicus (Rat).